The sequence spans 243 residues: R-spondin-2 (243 aa).

Positions 1 to 21 (MQFRLFSFALIILNCMDYSHC) are cleaved as a signal peptide. Disulfide bonds link Cys-40-Cys-46, Cys-43-Cys-52, Cys-55-Cys-74, Cys-78-Cys-93, Cys-96-Cys-104, Cys-101-Cys-110, Cys-113-Cys-124, Cys-128-Cys-141, Cys-145-Cys-187, Cys-156-Cys-163, and Cys-196-Cys-203. The FU repeat unit spans residues 90–134 (MNRCARCRIENCDSCFSKDFCTKCKVGFYLHRGRCFDECPDGFAP). Positions 144–204 (GCEVGHWSEW…RCKMTMRHCP (61 aa)) constitute a TSP type-1 domain. Asn-160 carries an N-linked (GlcNAc...) asparagine glycan. Basic residues predominate over residues 204 to 224 (PGGKRTPKAKEKRNKKKKRKL). The disordered stretch occupies residues 204–243 (PGGKRTPKAKEKRNKKKKRKLIERAQEQHSVFLATDRANQ).

It belongs to the R-spondin family. As to quaternary structure, interacts with WNT1. Binds heparin. Interacts with LGR4, LGR5 and LGR6. Interacts with E3 ubiquitin ligases RNF43 and ZNRF3.

Its subcellular location is the secreted. Activator of the canonical Wnt signaling pathway by acting as a ligand for LGR4-6 receptors. Upon binding to LGR4-6 (LGR4, LGR5 or LGR6), LGR4-6 associate with phosphorylated LRP6 and frizzled receptors that are activated by extracellular Wnt receptors, triggering the canonical Wnt signaling pathway to increase expression of target genes. Also regulates the canonical Wnt/beta-catenin-dependent pathway and non-canonical Wnt signaling by acting as an inhibitor of ZNRF3, an important regulator of the Wnt signaling pathway. During embryonic development, plays a crucial role in limb specification, amplifying the Wnt signaling pathway independently of LGR4-6 receptors, possibly by acting as a direct antagonistic ligand to RNF43 and ZNRF3, hence governing the number of limbs an embryo should form. The protein is R-spondin-2 (RSPO2) of Homo sapiens (Human).